An 84-amino-acid chain; its full sequence is Cytochrome b559 subunit alpha (84 aa).

The chain crosses the membrane as a helical span at residues 22-36; the sequence is VIHSITIPALFVAGW. His-24 contributes to the heme binding site.

The protein belongs to the PsbE/PsbF family. Heterodimer of an alpha subunit and a beta subunit. PSII is composed of 1 copy each of membrane proteins PsbA, PsbB, PsbC, PsbD, PsbE, PsbF, PsbH, PsbI, PsbJ, PsbK, PsbL, PsbM, PsbT, PsbX, PsbY, PsbZ, Psb30/Ycf12, at least 3 peripheral proteins of the oxygen-evolving complex and a large number of cofactors. It forms dimeric complexes. It depends on heme b as a cofactor.

The protein resides in the plastid. It localises to the chloroplast thylakoid membrane. Functionally, this b-type cytochrome is tightly associated with the reaction center of photosystem II (PSII). PSII is a light-driven water:plastoquinone oxidoreductase that uses light energy to abstract electrons from H(2)O, generating O(2) and a proton gradient subsequently used for ATP formation. It consists of a core antenna complex that captures photons, and an electron transfer chain that converts photonic excitation into a charge separation. This Porphyra purpurea (Red seaweed) protein is Cytochrome b559 subunit alpha.